We begin with the raw amino-acid sequence, 530 residues long: MSISLGNAFIKNFLGKAPDWYKIAILSFLVINPLVFFFVDPFTAGWLLVVEFIFTLAMALKCYPLQPGGLLAIEAIAIGMTSPEQVKHELVANIEVLLLLVFMVAGIYFMKQLLLFIFTKILIGIKSKTALSVAFCFTAAFLSAFLDALTVIAVVISVAVGFYAIYHRVASGQGGSQTHDHTCDSDVDELTREDLEDYRAFLRSLLMHAGVGTALGGVMTMVGEPQNLIIADQAGWMFGEFIIRMLPITAPVFICGILTCIAVEKLGICGYGAKLPENVRKILEDYEAEERKNRTNIDNAKLIIQGLIAVWLIVGLALHLAAVGLIGLSVIILATAFTGVIEEHSMGKAFEEALPFTALLAVFFAVVAVIIDQELFKPIIDAVLAVEDKGAQLALFYVANGLLSMVSDNVFVGTVYINEVKAALMDGVITRDQFDLLAVAINTGTNLPSVATPNGQAAFLFLLTSALAPLIQLSYGRMVWMALPYTIVLALVGMFGIIFFLEPMTAMFYDLGWIAPGTIESATSAISSGH.

A run of 12 helical transmembrane segments spans residues 13–33, 34–54, 90–110, 121–141, 145–165, 205–225, 241–261, 306–326, 351–371, 393–413, 455–475, and 481–501; these read FLGKAPDWYKIAILSFLVINP, LVFFFVDPFTAGWLLVVEFIF, LVANIEVLLLLVFMVAGIYFM, ILIGIKSKTALSVAFCFTAAF, FLDALTVIAVVISVAVGFYAI, LLMHAGVGTALGGVMTMVGEP, FIIRMLPITAPVFICGILTCI, GLIAVWLIVGLALHLAAVGLI, EEALPFTALLAVFFAVVAVII, LALFYVANGLLSMVSDNVFVG, GQAAFLFLLTSALAPLIQLSY, and MALPYTIVLALVGMFGIIFFL.

It belongs to the NhaB Na(+)/H(+) (TC 2.A.34) antiporter family.

The protein resides in the cell inner membrane. The enzyme catalyses 2 Na(+)(in) + 3 H(+)(out) = 2 Na(+)(out) + 3 H(+)(in). Functionally, na(+)/H(+) antiporter that extrudes sodium in exchange for external protons. In Aliivibrio fischeri (strain ATCC 700601 / ES114) (Vibrio fischeri), this protein is Na(+)/H(+) antiporter NhaB.